Reading from the N-terminus, the 333-residue chain is 4-hydroxythreonine-4-phosphate dehydrogenase (333 aa).

Substrate is bound by residues histidine 136 and threonine 137. Residues histidine 166, histidine 211, and histidine 266 each coordinate a divalent metal cation. The substrate site is built by lysine 274, asparagine 283, and arginine 292.

The protein belongs to the PdxA family. Homodimer. Zn(2+) is required as a cofactor. Requires Mg(2+) as cofactor. Co(2+) serves as cofactor.

The protein localises to the cytoplasm. The enzyme catalyses 4-(phosphooxy)-L-threonine + NAD(+) = 3-amino-2-oxopropyl phosphate + CO2 + NADH. It participates in cofactor biosynthesis; pyridoxine 5'-phosphate biosynthesis; pyridoxine 5'-phosphate from D-erythrose 4-phosphate: step 4/5. In terms of biological role, catalyzes the NAD(P)-dependent oxidation of 4-(phosphooxy)-L-threonine (HTP) into 2-amino-3-oxo-4-(phosphooxy)butyric acid which spontaneously decarboxylates to form 3-amino-2-oxopropyl phosphate (AHAP). In Acidithiobacillus ferrooxidans (strain ATCC 23270 / DSM 14882 / CIP 104768 / NCIMB 8455) (Ferrobacillus ferrooxidans (strain ATCC 23270)), this protein is 4-hydroxythreonine-4-phosphate dehydrogenase.